The primary structure comprises 393 residues: Triacylglycerol lipase 1 (393 aa).

The N-terminal stretch at 1–20 (MKWLLVAVLTSLTIFSALTQ) is a signal peptide. Asparagine 41 carries an N-linked (GlcNAc...) asparagine glycan. Catalysis depends on serine 166, which acts as the Nucleophile. A glycan (N-linked (GlcNAc...) asparagine) is linked at asparagine 261. Catalysis depends on charge relay system residues aspartate 334 and histidine 363.

It belongs to the AB hydrolase superfamily. Lipase family. Expressed in seedlings, roots, leaves, flowers and siliques. Specifically expressed in the epidermis.

Its subcellular location is the secreted. It carries out the reaction a triacylglycerol + H2O = a diacylglycerol + a fatty acid + H(+). The catalysed reaction is 1,2,3-tributanoylglycerol + H2O = dibutanoylglycerol + butanoate + H(+). It catalyses the reaction 1,2,3-trioctanoylglycerol + H2O = dioctanoylglycerol + octanoate + H(+). It functions in the pathway lipid metabolism; glycerolipid metabolism. In terms of biological role, triacylglycerol (TAG) lipase active on triolein, trioctanoin, tributyrin and 1,3-Diolein, but not on phospho- and galactolipids. Involved but dispensable for TAG storage breakdown during seed germination. The protein is Triacylglycerol lipase 1 of Arabidopsis thaliana (Mouse-ear cress).